The sequence spans 319 residues: HPr kinase/phosphorylase (319 aa).

Active-site residues include His-137 and Lys-158. Residue 152–159 (GDSGVGKS) participates in ATP binding. Residue Ser-159 participates in Mg(2+) binding. Asp-176 acts as the Proton acceptor; for phosphorylation activity. Proton donor; for dephosphorylation activity in catalysis. The tract at residues 201–210 (MEIRGLGIIN) is important for the catalytic mechanism of both phosphorylation and dephosphorylation. Residue Glu-202 coordinates Mg(2+). Arg-243 is an active-site residue. Positions 264–269 (PVRPGR) are important for the catalytic mechanism of dephosphorylation.

This sequence belongs to the HPrK/P family. Homohexamer. Requires Mg(2+) as cofactor.

The catalysed reaction is [HPr protein]-L-serine + ATP = [HPr protein]-O-phospho-L-serine + ADP + H(+). It catalyses the reaction [HPr protein]-O-phospho-L-serine + phosphate + H(+) = [HPr protein]-L-serine + diphosphate. Functionally, catalyzes the ATP- as well as the pyrophosphate-dependent phosphorylation of a specific serine residue in HPr, a phosphocarrier protein of the phosphoenolpyruvate-dependent sugar phosphotransferase system (PTS). HprK/P also catalyzes the pyrophosphate-producing, inorganic phosphate-dependent dephosphorylation (phosphorolysis) of seryl-phosphorylated HPr (P-Ser-HPr). The protein is HPr kinase/phosphorylase of Treponema pallidum subsp. pallidum (strain SS14).